We begin with the raw amino-acid sequence, 77 residues long: U8-hexatoxin-Mg1a (77 aa).

The first 22 residues, Met1–Ala22, serve as a signal peptide directing secretion. Positions Tyr23 to Arg43 are excised as a propeptide. Intrachain disulfides connect Cys46-Cys60, Cys53-Cys65, and Cys59-Cys76.

In terms of tissue distribution, expressed by the venom gland.

Its subcellular location is the secreted. Its function is as follows. Intrathorax injection into crickets causes paralysis prolonged for more than 60 minutes, followed by recovery. The sequence is that of U8-hexatoxin-Mg1a from Macrothele gigas (Japanese funnel web spider).